A 201-amino-acid polypeptide reads, in one-letter code: MAIAVAGPEIERLIQLLARLPGLGPRSARRAALHLIKKRDALMTPLASALQVAIDKIEVCKTCGNIDTQNPCTVCTDPRRDPSIIVVVADVADLWALERASATNGRYHVLGATLSPLDGVGPDDLTIDALVARAHDPAVGEIILALNATVDGQTTAHYVTDLLQDANVKVTRLAHGVPVGGELDYLDEGTLSAAMRQRTLF.

The segment at 60 to 75 (CKTCGNIDTQNPCTVC) adopts a C4-type zinc-finger fold. Residues 83–178 (SIIVVVADVA…KVTRLAHGVP (96 aa)) enclose the Toprim domain.

The protein belongs to the RecR family.

Functionally, may play a role in DNA repair. It seems to be involved in an RecBC-independent recombinational process of DNA repair. It may act with RecF and RecO. The chain is Recombination protein RecR from Rhodopseudomonas palustris (strain HaA2).